The following is a 118-amino-acid chain: T cell receptor gamma variable 3 (118 aa).

The N-terminal stretch at 1–17 (MRWALLVLLAFLSPASQ) is a signal peptide. Residues 18-118 (KSSNLEGRTK…GVYYCATWDR (101 aa)) enclose the Ig-like domain. Cysteines 41 and 113 form a disulfide. N-linked (GlcNAc...) asparagine glycosylation is present at N106.

Gamma-delta TR is a heterodimer composed of a gamma and delta chain; disulfide-linked. The gamma-delta TR is associated with the transmembrane signaling CD3 coreceptor proteins following the stoichiometry: a single gamma-delta TR heterodimer associates with one CD3D-CD3E heterodimer, one CD3G-CD3E heterodimer and one CD247 homodimer forming a stable octameric structure. Upon activation, gamma-delta TR complex associates with FCER1G to initiate intracellular signaling.

It localises to the cell membrane. In terms of biological role, v region of the variable domain of T cell receptor (TR) gamma chain that participates in the antigen recognition. Gamma-delta TRs recognize a variety of self and foreign non-peptide antigens frequently expressed at the epithelial boundaries between the host and external environment, including endogenous lipids presented by MH-like protein CD1D and phosphoantigens presented by butyrophilin-like molecule BTN3A1. Upon antigen recognition induces rapid, innate-like immune responses involved in pathogen clearance and tissue repair. Binding of gamma-delta TR complex to antigen triggers phosphorylation of immunoreceptor tyrosine-based activation motifs (ITAMs) in the CD3 chains by the LCK and FYN kinases, allowing the recruitment, phosphorylation, and activation of ZAP70 that facilitates phosphorylation of the scaffolding proteins LCP2 and LAT. This lead to the formation of a supramolecular signalosome that recruits the phospholipase PLCG1, resulting in calcium mobilization and ERK activation, ultimately leading to T cell expansion and differentiation into effector cells. Gamma-delta TRs are produced through somatic rearrangement of a limited repertoire of variable (V), diversity (D), and joining (J) genes. The potential diversity of gamma-delta TRs is conferred by the unique ability to rearrange (D) genes in tandem and to utilize all three reading frames. The combinatorial diversity is considerably increased by the sequence exonuclease trimming and random nucleotide (N) region additions which occur during the V-(D)-J rearrangements. The protein is T cell receptor gamma variable 3 of Homo sapiens (Human).